The sequence spans 504 residues: Aromatic and large neutral amino acid transporter 5-3 (504 aa).

Positions 1–24 (MESTEATMVERKAESPSSGDRARS) are disordered. The span at 8–24 (MVERKAESPSSGDRARS) shows a compositional bias: basic and acidic residues. The next 6 membrane-spanning stretches (helical) occupy residues 76 to 96 (YVVLVAYCLYCLLSGPSFMNW), 138 to 158 (HLFTVASCSYFVFAMLGGIML), 165 to 185 (FGALTGLACLITGWTLFGFSS), 206 to 226 (FFPCLCGANLFPGMVATIIAV), 233 to 253 (ISFIVGLSLRTIYINVEGATF), and 256 to 276 (VMLGYVGAGLGFCLLVALFII). A glycan (N-linked (GlcNAc...) asparagine) is linked at N310. A run of 6 helical transmembrane segments spans residues 324–344 (LSFLPLFPYFVLVLITILFFA), 356–376 (EANQIISIFSFVPCIILGGIA), 381–401 (IVPVMMICNTCGLLSWILMLI), 406–426 (CFAASQYIVSILISIQMSFLV), 436–456 (IFYPENLGKMIGFLCSVGGII), and 475–495 (MTVLCLIFALINEGLLLFMYV).

This sequence belongs to the SLC43A transporter (TC 2.A.1.44) family.

It is found in the cell membrane. It catalyses the reaction L-tyrosine(in) = L-tyrosine(out). With respect to regulation, L-tyrosine uptake is stimulated in trans by aromatic and large neutral amino acids, but not smaller or charged amino acids. Its function is as follows. L-tyrosine transporter that is essential for parasite survival and virulence. May also act as an aromatic and large neutral amino acid transporter. Does not cotransport other charged ions. Involved in amino acid homeostasis by facilitating the net uptake of L-tyrosine and maintaining intracellular pools of aromatic and large neutral amino acids through exchange. This is Aromatic and large neutral amino acid transporter 5-3 from Toxoplasma gondii.